The sequence spans 96 residues: Putative pterin-4-alpha-carbinolamine dehydratase (96 aa).

This sequence belongs to the pterin-4-alpha-carbinolamine dehydratase family.

The catalysed reaction is (4aS,6R)-4a-hydroxy-L-erythro-5,6,7,8-tetrahydrobiopterin = (6R)-L-erythro-6,7-dihydrobiopterin + H2O. The sequence is that of Putative pterin-4-alpha-carbinolamine dehydratase from Prochlorococcus marinus subsp. pastoris (strain CCMP1986 / NIES-2087 / MED4).